The sequence spans 185 residues: Ribosome-recycling factor (185 aa).

This sequence belongs to the RRF family.

Its subcellular location is the cytoplasm. Responsible for the release of ribosomes from messenger RNA at the termination of protein biosynthesis. May increase the efficiency of translation by recycling ribosomes from one round of translation to another. This chain is Ribosome-recycling factor, found in Kineococcus radiotolerans (strain ATCC BAA-149 / DSM 14245 / SRS30216).